Here is a 72-residue protein sequence, read N- to C-terminus: Protein RALF-like 36 (72 aa).

Positions 1–27 (MGISKKTVVQSFALIIIISIVMSTTEA) are cleaved as a signal peptide. 2 cysteine pairs are disulfide-bonded: Cys-43/Cys-51 and Cys-63/Cys-69.

The protein belongs to the plant rapid alkalinization factor (RALF) family.

The protein resides in the secreted. Its function is as follows. Cell signaling peptide that may regulate plant stress, growth, and development. Mediates a rapid alkalinization of extracellular space by mediating a transient increase in the cytoplasmic Ca(2+) concentration leading to a calcium-dependent signaling events through a cell surface receptor and a concomitant activation of some intracellular mitogen-activated protein kinases. The polypeptide is Protein RALF-like 36 (Arabidopsis thaliana (Mouse-ear cress)).